We begin with the raw amino-acid sequence, 1013 residues long: Ephrin type-A receptor 5 (1013 aa).

The N-terminal stretch at 1–31 (MGLRGGGGRAGGPAPGWTCLLLCAALRSLLA) is a signal peptide. Over 32–549 (SPGSEVNLLD…AASSDQSQIP (518 aa)) the chain is Extracellular. Residues 36–214 (EVNLLDSRTV…YYKKCPSVIR (179 aa)) form the Eph LBD domain. Asparagine 240, asparagine 275, asparagine 345, asparagine 399, asparagine 412, and asparagine 437 each carry an N-linked (GlcNAc...) asparagine glycan. Fibronectin type-III domains lie at 333–443 (PPSA…TNQA) and 444–538 (APSP…TSPV). A helical transmembrane segment spans residues 550–570 (IIVVSVTVGVILLAVVIGFLL). The Cytoplasmic portion of the chain corresponds to 571-1013 (SGSCCDHGCG…VQLVNGMVPL (443 aa)). Phosphotyrosine; by autocatalysis is present on residues tyrosine 626 and tyrosine 632. In terms of domain architecture, Protein kinase spans 651–912 (ITIERVIGAG…EIVSMLDKLI (262 aa)). ATP contacts are provided by residues 657–665 (IGAGEFGEV) and lysine 683. The active-site Proton acceptor is aspartate 776. Tyrosine 809 and tyrosine 958 each carry phosphotyrosine; by autocatalysis. One can recognise an SAM domain in the interval 941–1013 (GAYRSVGEWL…VQLVNGMVPL (73 aa)). A PDZ-binding motif is present at residues 1011–1013 (VPL).

The protein belongs to the protein kinase superfamily. Tyr protein kinase family. Ephrin receptor subfamily. Heterotetramer upon binding of the ligand. The heterotetramer is composed of an ephrin dimer and a receptor dimer. Oligomerization is probably required to induce biological responses. Phosphorylated. Phosphorylation is stimulated by the ligand EFNA5. As to expression, detected in the 10-day embryonic brain, weaker expression in the rest of the 10-day embryo. Undetected in adult tissues.

The protein resides in the cell membrane. It localises to the cell projection. Its subcellular location is the axon. It is found in the dendrite. It catalyses the reaction L-tyrosyl-[protein] + ATP = O-phospho-L-tyrosyl-[protein] + ADP + H(+). In terms of biological role, receptor tyrosine kinase which binds promiscuously GPI-anchored ephrin-A family ligands residing on adjacent cells, leading to contact-dependent bidirectional signaling into neighboring cells. The signaling pathway downstream of the receptor is referred to as forward signaling while the signaling pathway downstream of the ephrin ligand is referred to as reverse signaling. Among GPI-anchored ephrin-A ligands, EFNA5 most probably constitutes the cognate/functional ligand for EPHA5. Functions as an axon guidance molecule during development and may be involved in the development of the retinotectal, entorhino-hippocampal and hippocamposeptal pathways. Together with EFNA5 plays also a role in synaptic plasticity in adult brain through regulation of synaptogenesis. The protein is Ephrin type-A receptor 5 (EPHA5) of Gallus gallus (Chicken).